The following is a 482-amino-acid chain: tRNA sulfurtransferase (482 aa).

Positions 61 to 165 (LAIRDALTRI…DDRLLLIKGR (105 aa)) constitute a THUMP domain. Residues 183 to 184 (LI), Lys-265, Gly-287, and Gln-296 each bind ATP. The cysteines at positions 344 and 456 are disulfide-linked. Residues 404 to 482 (FGPNDVILDI…GFNNVKVYRP (79 aa)) enclose the Rhodanese domain. The active-site Cysteine persulfide intermediate is the Cys-456.

This sequence belongs to the ThiI family.

Its subcellular location is the cytoplasm. The catalysed reaction is [ThiI sulfur-carrier protein]-S-sulfanyl-L-cysteine + a uridine in tRNA + 2 reduced [2Fe-2S]-[ferredoxin] + ATP + H(+) = [ThiI sulfur-carrier protein]-L-cysteine + a 4-thiouridine in tRNA + 2 oxidized [2Fe-2S]-[ferredoxin] + AMP + diphosphate. The enzyme catalyses [ThiS sulfur-carrier protein]-C-terminal Gly-Gly-AMP + S-sulfanyl-L-cysteinyl-[cysteine desulfurase] + AH2 = [ThiS sulfur-carrier protein]-C-terminal-Gly-aminoethanethioate + L-cysteinyl-[cysteine desulfurase] + A + AMP + 2 H(+). Its pathway is cofactor biosynthesis; thiamine diphosphate biosynthesis. In terms of biological role, catalyzes the ATP-dependent transfer of a sulfur to tRNA to produce 4-thiouridine in position 8 of tRNAs, which functions as a near-UV photosensor. Also catalyzes the transfer of sulfur to the sulfur carrier protein ThiS, forming ThiS-thiocarboxylate. This is a step in the synthesis of thiazole, in the thiamine biosynthesis pathway. The sulfur is donated as persulfide by IscS. This chain is tRNA sulfurtransferase, found in Escherichia coli (strain 55989 / EAEC).